The chain runs to 622 residues: Kinesin light chain 2 (622 aa).

Positions Ile-78–Ile-143 form a coiled coil. Positions Lys-145–Leu-164 are enriched in basic and acidic residues. The segment at Lys-145–Gly-191 is disordered. Phosphoserine is present on residues Ser-151, Ser-175, and Ser-179. Residues Pro-180–Gly-190 show a composition bias toward gly residues. TPR repeat units lie at residues Leu-198–Thr-231, Ala-240–Thr-273, Ala-282–Val-315, Ala-324–Arg-357, and Ala-366–Lys-399. Ser-445 is subject to Phosphoserine. One copy of the TPR 6 repeat lies at Asn-449–Gly-482. 2 disordered regions span residues Ser-476–Lys-548 and Lys-563–Gly-622. A compositionally biased stretch (basic and acidic residues) spans Glu-493 to Arg-509. 2 positions are modified to phosphoserine: Ser-508 and Ser-521. Positions Gly-538–Gly-547 are enriched in low complexity. Residues Ser-581, Ser-582, Ser-589, Ser-608, Ser-610, and Ser-615 each carry the phosphoserine modification. Positions Leu-601–Gly-622 are enriched in low complexity.

This sequence belongs to the kinesin light chain family. Oligomeric complex composed of two heavy chains and two light chains. Interacts (via TPR repeats) with PLEKHM2.

The protein localises to the cytoplasm. It localises to the cytoskeleton. The protein resides in the lysosome membrane. Kinesin is a microtubule-associated force-producing protein that plays a role in organelle transport. The light chain functions in coupling of cargo to the heavy chain or in the modulation of its ATPase activity. Through binding with PLEKHM2 and ARL8B, recruits kinesin-1 to lysosomes and hence direct lysosomes movement toward microtubule plus ends. This chain is Kinesin light chain 2, found in Homo sapiens (Human).